Consider the following 190-residue polypeptide: Potassium-transporting ATPase KdpC subunit (190 aa).

Residues 13 to 33 (VGFLLLTLVCGVVYPGIVTII) form a helical membrane-spanning segment.

It belongs to the KdpC family. The system is composed of three essential subunits: KdpA, KdpB and KdpC.

It is found in the cell membrane. Part of the high-affinity ATP-driven potassium transport (or Kdp) system, which catalyzes the hydrolysis of ATP coupled with the electrogenic transport of potassium into the cytoplasm. This subunit acts as a catalytic chaperone that increases the ATP-binding affinity of the ATP-hydrolyzing subunit KdpB by the formation of a transient KdpB/KdpC/ATP ternary complex. This is Potassium-transporting ATPase KdpC subunit from Listeria welshimeri serovar 6b (strain ATCC 35897 / DSM 20650 / CCUG 15529 / CIP 8149 / NCTC 11857 / SLCC 5334 / V8).